A 151-amino-acid polypeptide reads, in one-letter code: UPF0208 membrane protein YfbV (151 aa).

A run of 2 helical transmembrane segments spans residues 46 to 65 and 69 to 91; these read YAIRFMPPVAVFTLCWQIAL and LGPAVATALFALSLPMQGLWWLG.

It belongs to the UPF0208 family.

It localises to the cell inner membrane. In Salmonella choleraesuis (strain SC-B67), this protein is UPF0208 membrane protein YfbV.